A 286-amino-acid chain; its full sequence is Polyamine aminopropyltransferase (286 aa).

The PABS domain occupies Thr-5 to Asp-238. An S-methyl-5'-thioadenosine-binding site is contributed by Gln-33. Residues His-64 and Asp-88 each contribute to the spermidine site. Residues Glu-108 and Asp-140–Gly-141 each bind S-methyl-5'-thioadenosine. Asp-158 (proton acceptor) is an active-site residue. Asp-158–Asp-161 contributes to the spermidine binding site. Residue Pro-165 participates in S-methyl-5'-thioadenosine binding.

This sequence belongs to the spermidine/spermine synthase family. Homodimer or homotetramer.

The protein localises to the cytoplasm. It carries out the reaction S-adenosyl 3-(methylsulfanyl)propylamine + putrescine = S-methyl-5'-thioadenosine + spermidine + H(+). It participates in amine and polyamine biosynthesis; spermidine biosynthesis; spermidine from putrescine: step 1/1. Its function is as follows. Catalyzes the irreversible transfer of a propylamine group from the amino donor S-adenosylmethioninamine (decarboxy-AdoMet) to putrescine (1,4-diaminobutane) to yield spermidine. The chain is Polyamine aminopropyltransferase from Salmonella arizonae (strain ATCC BAA-731 / CDC346-86 / RSK2980).